An 87-amino-acid polypeptide reads, in one-letter code: UPF0250 protein Ent638_1166 (87 aa).

Belongs to the UPF0250 family.

The sequence is that of UPF0250 protein Ent638_1166 from Enterobacter sp. (strain 638).